Reading from the N-terminus, the 156-residue chain is 6,7-dimethyl-8-ribityllumazine synthase (156 aa).

Residues Phe22, 57–59, and 81–83 each bind 5-amino-6-(D-ribitylamino)uracil; these read AYE and TVI. (2S)-2-hydroxy-3-oxobutyl phosphate is bound at residue 86–87; that stretch reads GT. Catalysis depends on His89, which acts as the Proton donor. Phe114 serves as a coordination point for 5-amino-6-(D-ribitylamino)uracil. Arg128 serves as a coordination point for (2S)-2-hydroxy-3-oxobutyl phosphate.

The protein belongs to the DMRL synthase family. Forms an icosahedral capsid composed of 60 subunits, arranged as a dodecamer of pentamers.

It catalyses the reaction (2S)-2-hydroxy-3-oxobutyl phosphate + 5-amino-6-(D-ribitylamino)uracil = 6,7-dimethyl-8-(1-D-ribityl)lumazine + phosphate + 2 H2O + H(+). It functions in the pathway cofactor biosynthesis; riboflavin biosynthesis; riboflavin from 2-hydroxy-3-oxobutyl phosphate and 5-amino-6-(D-ribitylamino)uracil: step 1/2. Its function is as follows. Catalyzes the formation of 6,7-dimethyl-8-ribityllumazine by condensation of 5-amino-6-(D-ribitylamino)uracil with 3,4-dihydroxy-2-butanone 4-phosphate. This is the penultimate step in the biosynthesis of riboflavin. This is 6,7-dimethyl-8-ribityllumazine synthase from Yersinia pseudotuberculosis serotype O:1b (strain IP 31758).